A 486-amino-acid polypeptide reads, in one-letter code: Malonate-semialdehyde dehydrogenase (486 aa).

Residues Phe-154, Lys-178, Glu-181, Arg-182, and Ser-231 each coordinate NAD(+). Residue Cys-286 is the Nucleophile of the active site. Glu-386 serves as a coordination point for NAD(+).

Belongs to the aldehyde dehydrogenase family. IolA subfamily. As to quaternary structure, homotetramer.

It carries out the reaction 3-oxopropanoate + NAD(+) + CoA + H2O = hydrogencarbonate + acetyl-CoA + NADH + H(+). It catalyses the reaction 2-methyl-3-oxopropanoate + NAD(+) + CoA + H2O = propanoyl-CoA + hydrogencarbonate + NADH + H(+). The protein operates within polyol metabolism; myo-inositol degradation into acetyl-CoA; acetyl-CoA from myo-inositol: step 7/7. In terms of biological role, catalyzes the oxidation of malonate semialdehyde (MSA) and methylmalonate semialdehyde (MMSA) into acetyl-CoA and propanoyl-CoA, respectively. Is involved in a myo-inositol catabolic pathway. Bicarbonate, and not CO2, is the end-product of the enzymatic reaction. The sequence is that of Malonate-semialdehyde dehydrogenase from Bacillus cytotoxicus (strain DSM 22905 / CIP 110041 / 391-98 / NVH 391-98).